The following is a 173-amino-acid chain: Mitochondrial holo-[acyl-carrier-protein] synthase (173 aa).

Belongs to the P-Pant transferase superfamily. AcpS family.

The protein localises to the mitochondrion. It carries out the reaction apo-[ACP] + CoA = holo-[ACP] + adenosine 3',5'-bisphosphate + H(+). Transfers the 4'-phosphopantetheine moiety from coenzyme A to a Ser of mitochondrial acyl-carrier-protein. The protein is Mitochondrial holo-[acyl-carrier-protein] synthase (PPT2) of Saccharomyces cerevisiae (strain ATCC 204508 / S288c) (Baker's yeast).